We begin with the raw amino-acid sequence, 201 residues long: Adenylyl-sulfate kinase (201 aa).

The disordered stretch occupies residues 1–23 (MALHDENVVWHSHPVTPQQREQH). 35–42 (GLSGSGKS) contacts ATP. Ser-109 (phosphoserine intermediate) is an active-site residue.

Belongs to the APS kinase family.

It carries out the reaction adenosine 5'-phosphosulfate + ATP = 3'-phosphoadenylyl sulfate + ADP + H(+). Its pathway is sulfur metabolism; hydrogen sulfide biosynthesis; sulfite from sulfate: step 2/3. Catalyzes the synthesis of activated sulfate. The chain is Adenylyl-sulfate kinase from Escherichia coli O127:H6 (strain E2348/69 / EPEC).